Consider the following 225-residue polypeptide: ATP-dependent Clp protease proteolytic subunit (225 aa).

The active-site Nucleophile is the S126. H151 is a catalytic residue.

The protein belongs to the peptidase S14 family. In terms of assembly, fourteen ClpP subunits assemble into 2 heptameric rings which stack back to back to give a disk-like structure with a central cavity, resembling the structure of eukaryotic proteasomes.

The protein localises to the cytoplasm. The catalysed reaction is Hydrolysis of proteins to small peptides in the presence of ATP and magnesium. alpha-casein is the usual test substrate. In the absence of ATP, only oligopeptides shorter than five residues are hydrolyzed (such as succinyl-Leu-Tyr-|-NHMec, and Leu-Tyr-Leu-|-Tyr-Trp, in which cleavage of the -Tyr-|-Leu- and -Tyr-|-Trp bonds also occurs).. In terms of biological role, cleaves peptides in various proteins in a process that requires ATP hydrolysis. Has a chymotrypsin-like activity. Plays a major role in the degradation of misfolded proteins. The chain is ATP-dependent Clp protease proteolytic subunit from Psychrobacter arcticus (strain DSM 17307 / VKM B-2377 / 273-4).